We begin with the raw amino-acid sequence, 172 residues long: Ribosome maturation factor RimP (172 aa).

Belongs to the RimP family.

The protein localises to the cytoplasm. In terms of biological role, required for maturation of 30S ribosomal subunits. The chain is Ribosome maturation factor RimP from Nitratidesulfovibrio vulgaris (strain ATCC 29579 / DSM 644 / CCUG 34227 / NCIMB 8303 / VKM B-1760 / Hildenborough) (Desulfovibrio vulgaris).